Reading from the N-terminus, the 156-residue chain is 17.4 kDa class I heat shock protein (156 aa).

Positions 42 to 156 constitute a sHSP domain; sequence DVAAFTNAKV…PEVKSVDISG (115 aa).

Belongs to the small heat shock protein (HSP20) family. In terms of assembly, may form oligomeric structures. Binds to AKR2A.

Its subcellular location is the cytoplasm. In Arabidopsis thaliana (Mouse-ear cress), this protein is 17.4 kDa class I heat shock protein (HSP17.4A).